We begin with the raw amino-acid sequence, 290 residues long: Appressorium protein ROW2 (290 aa).

A signal peptide spans 1–19 (MFTKSVFIALVAGVLGVTA). Residues 266-290 (AIKTPSKRSVMATHVKRSPEWEEEP) form a disordered region.

Its subcellular location is the secreted. The protein localises to the nucleus. Functionally, plays a role in the formation of the appressorium, a specialized infection structure with the purpose of penetrating the host surface, and is required for proper remodeling of the appressorium wall and vesicle secretion. The protein is Appressorium protein ROW2 of Mycosarcoma maydis (Corn smut fungus).